Here is a 610-residue protein sequence, read N- to C-terminus: UvrABC system protein C (610 aa).

One can recognise a GIY-YIG domain in the interval 16-94 (HQPGVYRMYN…IKQYLPKYNV (79 aa)). Residues 204–239 (QQVLKQLIEKMEVASQQLRFEDAAKFRDQIQAIRRV) form the UVR domain.

It belongs to the UvrC family. Interacts with UvrB in an incision complex.

Its subcellular location is the cytoplasm. In terms of biological role, the UvrABC repair system catalyzes the recognition and processing of DNA lesions. UvrC both incises the 5' and 3' sides of the lesion. The N-terminal half is responsible for the 3' incision and the C-terminal half is responsible for the 5' incision. The protein is UvrABC system protein C of Vibrio parahaemolyticus serotype O3:K6 (strain RIMD 2210633).